A 441-amino-acid chain; its full sequence is Protein C-ets-1 (441 aa).

N6-acetyllysine; alternate is present on residues Lys-8 and Lys-15. Residues Lys-8 and Lys-15 each participate in a glycyl lysine isopeptide (Lys-Gly) (interchain with G-Cter in SUMO2); alternate cross-link. At Thr-38 the chain carries Phosphothreonine; by MAPK. The region spanning 51–136 (ATFSGFTKEQ…EHLEILQKED (86 aa)) is the PNT domain. Residues 130–243 (EILQKEDVKP…DNMCMGRTSR (114 aa)) are activation domain; required for transcription activation. Residue Lys-138 forms a Glycyl lysine isopeptide (Lys-Gly) (interchain with G-Cter in SUMO2) linkage. A Phosphotyrosine modification is found at Tyr-223. Residue Lys-227 forms a Glycyl lysine isopeptide (Lys-Gly) (interchain with G-Cter in SUMO) linkage. 2 positions are modified to phosphoserine: Ser-251 and Ser-254. Thr-265 is modified (phosphothreonine). Phosphoserine is present on residues Ser-267, Ser-270, Ser-282, and Ser-285. A helix HI-1 region spans residues 304-312 (FKDYVRDRA). Position 305 is an N6-acetyllysine (Lys-305). Positions 323–330 (AAALAGYT) are helix HI-2. The segment at residues 335–415 (IQLWQFLLEL…AGKRYVYRFV (81 aa)) is a DNA-binding region (ETS). The tract at residues 418-422 (LQSLL) is helix H4. Residues 426–432 (PEELHAM) form a helix H5 region.

The protein belongs to the ETS family. Binds DNA as a homodimer; homodimerization is required for transcription activation. Interacts with MAF and MAFB. Interacts with PAX5; the interaction alters DNA-binding properties. Interacts with DAXX. Interacts with UBE2I. Interacts with SP100; the interaction is direct and modulates ETS1 transcriptional activity. In terms of processing, sumoylated on Lys-15 and Lys-227, preferentially with SUMO2; which inhibits transcriptional activity. Post-translationally, ubiquitinated; which induces proteasomal degradation. Phosphorylation at Ser-251, Ser-282 and Ser-285 by CaMK2/CaMKII in response to calcium signaling decreases affinity for DNA: an increasing number of phosphoserines causes DNA-binding to become progressively weaker. Highly expressed within lymphoid cells. Isoforms c-ETS-1A and Ets-1 p27 are both detected in all fetal tissues tested, but vary with tissue type in adult tissues. None is detected in brain or kidney.

The protein localises to the nucleus. The protein resides in the cytoplasm. Its activity is regulated as follows. Autoinhibited by a module composed of four alpha helices (HI-1, HI-2, H4, and H5) that flank the DNA-binding ETS domain, reducing the affinity for DNA. Phosphorylation by CaMK2/CaMKII in response to calcium signaling decreases affinity for DNA. Its function is as follows. Transcription factor. Directly controls the expression of cytokine and chemokine genes in a wide variety of different cellular contexts. May control the differentiation, survival and proliferation of lymphoid cells. May also regulate angiogenesis through regulation of expression of genes controlling endothelial cell migration and invasion. Functionally, acts as a dominant-negative for isoform c-ETS-1A. The polypeptide is Protein C-ets-1 (ETS1) (Homo sapiens (Human)).